A 355-amino-acid chain; its full sequence is UDP-galactose translocator 1 (355 aa).

Positions 1–36 (MKFQNVHISHQDEDKEKLLPNDKDVEKADESPSSSR) are disordered. Positions 9–30 (SHQDEDKEKLLPNDKDVEKADE) are enriched in basic and acidic residues. The next 6 membrane-spanning stretches (helical) occupy residues 40–60 (VFKCYVIASMTFIWTAYTLTI), 177–197 (WMAITLLMFGVAFVQMNNVSA), 211–231 (IVGLSAVLATCVTAGFAGVYF), 282–302 (VWAVVILLGVGGLYISLVMRY), 309–329 (SMASAVSIILVVVLSMLIFPD), and 330–350 (IFIGMYFVLGTICVVLAVLLY).

The protein belongs to the nucleotide-sugar transporter family. SLC35A subfamily.

It localises to the membrane. The protein localises to the cytoplasmic granule membrane. The protein is UDP-galactose translocator 1 (ugtp-1) of Caenorhabditis elegans.